A 338-amino-acid chain; its full sequence is Ketol-acid reductoisomerase (NADP(+)) (338 aa).

A KARI N-terminal Rossmann domain is found at 1–181 (MKVFYDKDCD…GGGRTGIIET (181 aa)). NADP(+) contacts are provided by residues 24-27 (YGSQ), Arg-47, Ser-50, Thr-52, and 82-85 (DEFQ). Residue His-107 is part of the active site. Residue Gly-133 participates in NADP(+) binding. Positions 182 to 327 (TFKDETETDL…EKLRSMMPWI (146 aa)) constitute a KARI C-terminal knotted domain. Mg(2+) is bound by residues Asp-190, Glu-194, Glu-226, and Glu-230. Residue Ser-251 coordinates substrate.

Belongs to the ketol-acid reductoisomerase family. Mg(2+) is required as a cofactor.

The catalysed reaction is (2R)-2,3-dihydroxy-3-methylbutanoate + NADP(+) = (2S)-2-acetolactate + NADPH + H(+). It catalyses the reaction (2R,3R)-2,3-dihydroxy-3-methylpentanoate + NADP(+) = (S)-2-ethyl-2-hydroxy-3-oxobutanoate + NADPH + H(+). Its pathway is amino-acid biosynthesis; L-isoleucine biosynthesis; L-isoleucine from 2-oxobutanoate: step 2/4. The protein operates within amino-acid biosynthesis; L-valine biosynthesis; L-valine from pyruvate: step 2/4. Functionally, involved in the biosynthesis of branched-chain amino acids (BCAA). Catalyzes an alkyl-migration followed by a ketol-acid reduction of (S)-2-acetolactate (S2AL) to yield (R)-2,3-dihydroxy-isovalerate. In the isomerase reaction, S2AL is rearranged via a Mg-dependent methyl migration to produce 3-hydroxy-3-methyl-2-ketobutyrate (HMKB). In the reductase reaction, this 2-ketoacid undergoes a metal-dependent reduction by NADPH to yield (R)-2,3-dihydroxy-isovalerate. This chain is Ketol-acid reductoisomerase (NADP(+)), found in Pseudomonas syringae pv. tomato (strain ATCC BAA-871 / DC3000).